Here is a 720-residue protein sequence, read N- to C-terminus: Methionine--tRNA ligase (720 aa).

The 'HIGH' region motif lies at 27–37; it reads PYANGQIHIGH. Zn(2+) is bound by residues Cys158, Cys161, Cys171, and Cys174. A 'KMSKS' region motif is present at residues 348-352; that stretch reads KMSKS. ATP is bound at residue Lys351. The tRNA-binding domain maps to 614–720; that stretch reads DFAKIDLRIA…SGAKPGMRVK (107 aa).

This sequence belongs to the class-I aminoacyl-tRNA synthetase family. MetG type 1 subfamily. In terms of assembly, homodimer. The cofactor is Zn(2+).

The protein resides in the cytoplasm. The catalysed reaction is tRNA(Met) + L-methionine + ATP = L-methionyl-tRNA(Met) + AMP + diphosphate. Is required not only for elongation of protein synthesis but also for the initiation of all mRNA translation through initiator tRNA(fMet) aminoacylation. The chain is Methionine--tRNA ligase from Burkholderia lata (strain ATCC 17760 / DSM 23089 / LMG 22485 / NCIMB 9086 / R18194 / 383).